Here is a 376-residue protein sequence, read N- to C-terminus: Actin-like protein 53D (376 aa).

The segment at 1-40 (MSSEVDSNSHHAAVVIDNGSGVCKAGFSPEDTPRAVFPSI) is necessary and sufficient for recruitment to the fusome and actin cones of spermatocyte cysts.

It belongs to the actin family. ARP1 subfamily. In terms of tissue distribution, high expression in males whereas expression in females is very low. In adult males, highest levels of expression are in the testis. In adult females, expressed only in the ovaries at very low levels. In larvae, highly expressed in the imaginal disk whereas in prepupae and pupae modest levels of expression occur in the fat body.

The protein localises to the cytoplasm. Its subcellular location is the cytoskeleton. Its function is as follows. Required for optimal embryo development, particularly under heat stress conditions. Also appears to have a role in negatively regulating spermatocyte cyst development. Under heat stress conditions, required for the correct organization and migration of nuclei during early embryogenesis, and therefore possibly functions by regulating embryonic actin networks during the heat stress response. The sequence is that of Actin-like protein 53D from Drosophila melanogaster (Fruit fly).